Here is a 370-residue protein sequence, read N- to C-terminus: Pantothenate kinase 3 (370 aa).

Catalysis depends on E138, which acts as the Proton acceptor. Residues S192, S195, and R207 each contribute to the acetyl-CoA site.

It belongs to the type II pantothenate kinase family. Homodimer. Highly expressed in the liver.

It localises to the cytoplasm. It catalyses the reaction (R)-pantothenate + ATP = (R)-4'-phosphopantothenate + ADP + H(+). It participates in cofactor biosynthesis; coenzyme A biosynthesis; CoA from (R)-pantothenate: step 1/5. With respect to regulation, subject to allosteric regulation, exists in two distinct conformational states, a catalytically incompetent (or open) conformation stabilized by the binding of acetyl(acyl)-CoA, and a catalytically competent (or closed) conformation stabilized by ATP-binding. Inhibited by acetyl-CoA and its thioesters which act as allosteric inhibitors and compete with the ATP-binding site. Inhibited by sulfonylureas and thiazolidinediones. Activated by oleoylethanolamide, palmitoyl-carnitine and oleoyl-carnitine. Functionally, catalyzes the phosphorylation of pantothenate to generate 4'-phosphopantothenate in the first and rate-determining step of coenzyme A (CoA) synthesis. The chain is Pantothenate kinase 3 (PANK3) from Homo sapiens (Human).